The following is a 273-amino-acid chain: Type II pantothenate kinase (273 aa).

An ATP-binding site is contributed by D8–K15. E76 (proton acceptor) is an active-site residue. ATP-binding positions include T105, G127–M131, F143, and S230.

This sequence belongs to the type II pantothenate kinase family. As to quaternary structure, homodimer.

The protein localises to the cytoplasm. The enzyme catalyses (R)-pantothenate + ATP = (R)-4'-phosphopantothenate + ADP + H(+). It participates in cofactor biosynthesis; coenzyme A biosynthesis; CoA from (R)-pantothenate: step 1/5. In terms of biological role, catalyzes the phosphorylation of pantothenate (Pan), the first step in CoA biosynthesis. The polypeptide is Type II pantothenate kinase (Bacillus cereus (strain G9842)).